The primary structure comprises 217 residues: Outer-membrane lipoprotein LolB (217 aa).

The first 20 residues, 1–20 (MSKTVRTLALGGLVLAGLSA), serve as a signal peptide directing secretion. Cys21 carries N-palmitoyl cysteine lipidation. Cys21 carries S-diacylglycerol cysteine lipidation. A disordered region spans residues 105-124 (DTTSGAGRLEGLEGGPRSGP).

Belongs to the LolB family. Monomer.

The protein resides in the cell outer membrane. Plays a critical role in the incorporation of lipoproteins in the outer membrane after they are released by the LolA protein. The protein is Outer-membrane lipoprotein LolB of Xanthomonas axonopodis pv. citri (strain 306).